The sequence spans 49 residues: Large ribosomal subunit protein uL16 (49 aa).

It belongs to the universal ribosomal protein uL16 family. Part of the 50S ribosomal subunit.

Binds 23S rRNA and is also seen to make contacts with the A and possibly P site tRNAs. This is Large ribosomal subunit protein uL16 (rplP) from Aquifex pyrophilus.